We begin with the raw amino-acid sequence, 396 residues long: Stearoyl-[acyl-carrier-protein] 9-desaturase, chloroplastic (396 aa).

A chloroplast-targeting transit peptide spans 1 to 33 (MAIRINTATFQSDLYRSFAFPQPKPLRSPKFAM). Fe cation-binding residues include glutamate 138, glutamate 176, histidine 179, glutamate 229, glutamate 262, and histidine 265.

This sequence belongs to the fatty acid desaturase type 2 family. In terms of assembly, homodimer. Fe(2+) is required as a cofactor.

The protein localises to the plastid. Its subcellular location is the chloroplast. It catalyses the reaction octadecanoyl-[ACP] + 2 reduced [2Fe-2S]-[ferredoxin] + O2 + 2 H(+) = (9Z)-octadecenoyl-[ACP] + 2 oxidized [2Fe-2S]-[ferredoxin] + 2 H2O. It functions in the pathway lipid metabolism; fatty acid metabolism. In terms of biological role, converts stearoyl-ACP to oleoyl-ACP by introduction of a cis double bond between carbons 9 and 10 of the acyl chain. The sequence is that of Stearoyl-[acyl-carrier-protein] 9-desaturase, chloroplastic from Helianthus annuus (Common sunflower).